Consider the following 238-residue polypeptide: Flagellar L-ring protein (238 aa).

Residues 1–16 (MRKLILISLCIFFLAS) form the signal peptide. C17 carries the N-palmitoyl cysteine lipid modification. C17 carries the S-diacylglycerol cysteine lipid modification.

The protein belongs to the FlgH family. In terms of assembly, the basal body constitutes a major portion of the flagellar organelle and consists of four rings (L,P,S, and M) mounted on a central rod.

Its subcellular location is the cell outer membrane. The protein localises to the bacterial flagellum basal body. In terms of biological role, assembles around the rod to form the L-ring and probably protects the motor/basal body from shearing forces during rotation. The polypeptide is Flagellar L-ring protein (Thermodesulfovibrio yellowstonii (strain ATCC 51303 / DSM 11347 / YP87)).